We begin with the raw amino-acid sequence, 421 residues long: MFLLPRFILVSCIIGSLGFDNPPTNVVSHLNGDWFLFGDSRSDCNHVVNTNPRNYSYMDLNPALCDSGKISSKAGNSIFRSFHFTDFYNYTGEGQQIIFYEGVNFTPYHAFKCTTSGSNDIWMQNKGLFYTQVYKNMAVYRSLTFVNVPYVYNGSAQSTALCKSGSLVLNNPAYIAREANFGDYYYKVEADFYLSGCDEYIVPLCIFNGKFLSNTKYYDDSQYYFNKDTGVIYGLNSTETITTGFDFNCHYLVLPSGNYLAISNELLLTVPTKAICLNKRKDFTPVQVVHSRWNNARQSDNMTAVACQPPYCYFRNSTTNYVGVYDINHGDAGFTSILSGLLYDSPCFSQQGVFRYNNVSSVWPLYPYGRCPTAADINTPDVPICVYDPLPLILLGILLGVAVIIIVVLLLYFMVENGTRL.

The first 16 residues, 1–16 (MFLLPRFILVSCIIGS), serve as a signal peptide directing secretion. The segment at 7–127 (FILVSCIIGS…SNDIWMQNKG (121 aa)) is esterase domain 1. The Virion surface portion of the chain corresponds to 17 to 392 (LGFDNPPTNV…PICVYDPLPL (376 aa)). The active-site Nucleophile is S40. An intrachain disulfide couples C44 to C65. Residues N54, N89, N153, N236, and N301 are each glycosylated (N-linked (GlcNAc...) asparagine; by host). 3 cysteine pairs are disulfide-bonded: C113–C162, C197–C276, and C205–C249. The receptor binding stretch occupies residues 128-266 (LFYTQVYKNM…GNYLAISNEL (139 aa)). Residues 267–379 (LLTVPTKAIC…RCPTAADINT (113 aa)) are esterase domain 2. A disulfide bond links C307 and C312. N316 carries an N-linked (GlcNAc...) asparagine; by host glycan. Residues D326 and H329 each act as charge relay system in the active site. Cysteines 347 and 371 form a disulfide. Residue N358 is glycosylated (N-linked (GlcNAc...) asparagine; by host). The helical transmembrane segment at 393 to 413 (ILLGILLGVAVIIIVVLLLYF) threads the bilayer. Residues 414–421 (MVENGTRL) lie on the Intravirion side of the membrane. Residue N417 is glycosylated (N-linked (GlcNAc...) asparagine; by host).

Belongs to the influenza type C/coronaviruses hemagglutinin-esterase family. As to quaternary structure, homodimer; disulfide-linked. Forms a complex with the M protein in the pre-Golgi. Associates then with S-M complex to form a ternary complex S-M-HE. Post-translationally, N-glycosylated in the host RER.

Its subcellular location is the virion membrane. The protein resides in the host cell membrane. It catalyses the reaction N-acetyl-9-O-acetylneuraminate + H2O = N-acetylneuraminate + acetate + H(+). The catalysed reaction is N-acetyl-4-O-acetylneuraminate + H2O = N-acetylneuraminate + acetate + H(+). Functionally, structural protein that makes short spikes at the surface of the virus. Contains receptor binding and receptor-destroying activities. Mediates de-O-acetylation of N-acetyl-4-O-acetylneuraminic acid, which is probably the receptor determinant recognized by the virus on the surface of erythrocytes and susceptible cells. This receptor-destroying activity is important for virus release as it probably helps preventing self-aggregation and ensures the efficient spread of the progeny virus from cell to cell. May serve as a secondary viral attachment protein for initiating infection, the spike protein being the major one. May become a target for both the humoral and the cellular branches of the immune system. This Bos taurus (Bovine) protein is Hemagglutinin-esterase.